A 116-amino-acid polypeptide reads, in one-letter code: Large ribosomal subunit protein bL17 (116 aa).

It belongs to the bacterial ribosomal protein bL17 family. In terms of assembly, part of the 50S ribosomal subunit. Contacts protein L32.

The protein is Large ribosomal subunit protein bL17 of Prochlorococcus marinus (strain MIT 9515).